We begin with the raw amino-acid sequence, 350 residues long: ATPase GET3 (350 aa).

Residue 26–33 (KGGVGKTT) coordinates ATP. The active site involves Asp57. Glu241 and Asn268 together coordinate ATP. Cys281 and Cys284 together coordinate Zn(2+).

The protein belongs to the arsA ATPase family. Homodimer. Component of the Golgi to ER traffic (GET) complex, which is composed of GET1, GET2 and GET3. Within the complex, GET1 and GET2 form a heterotetramer which is stabilized by phosphatidylinositol binding and which binds to the GET3 homodimer. Interacts with the chloride channel protein GEF1.

The protein resides in the cytoplasm. Its subcellular location is the endoplasmic reticulum. It localises to the golgi apparatus. ATPase required for the post-translational delivery of tail-anchored (TA) proteins to the endoplasmic reticulum. Recognizes and selectively binds the transmembrane domain of TA proteins in the cytosol. This complex then targets to the endoplasmic reticulum by membrane-bound receptors GET1 and GET2, where the tail-anchored protein is released for insertion. This process is regulated by ATP binding and hydrolysis. ATP binding drives the homodimer towards the closed dimer state, facilitating recognition of newly synthesized TA membrane proteins. ATP hydrolysis is required for insertion. Subsequently, the homodimer reverts towards the open dimer state, lowering its affinity for the GET1-GET2 receptor, and returning it to the cytosol to initiate a new round of targeting. Cooperates with the HDEL receptor ERD2 to mediate the ATP-dependent retrieval of resident ER proteins that contain a C-terminal H-D-E-L retention signal from the Golgi to the ER. Involved in low-level resistance to the oxyanions arsenite and arsenate, and in heat tolerance. In Candida glabrata (strain ATCC 2001 / BCRC 20586 / JCM 3761 / NBRC 0622 / NRRL Y-65 / CBS 138) (Yeast), this protein is ATPase GET3.